The primary structure comprises 2137 residues: Pecanex-like protein 2 (2137 aa).

The next 2 helical transmembrane spans lie at C34–P54 and A57–V77. Disordered regions lie at residues Q92–S163, N225–G251, E402–V530, and S545–N572. The segment covering S96–T114 has biased composition (basic and acidic residues). Residues H116–I125 are compositionally biased toward polar residues. N-linked (GlcNAc...) asparagine glycosylation occurs at N136. A compositionally biased stretch (polar residues) spans S146–S156. An N-linked (GlcNAc...) asparagine glycan is attached at N449. Over residues I479–W490 the composition is skewed to basic and acidic residues. Residues G510 to K520 are compositionally biased toward polar residues. Residues N550, N572, N587, N598, and N613 are each glycosylated (N-linked (GlcNAc...) asparagine). The segment covering A593 to E602 has biased composition (polar residues). The interval A593 to D612 is disordered. Disordered regions lie at residues E621–P655 and A740–P763. The segment covering G630–P655 has biased composition (polar residues). Positions S746–S760 are enriched in low complexity. A run of 13 helical transmembrane segments spans residues L844–F864, M868–V888, Q901–L921, Y952–I972, I983–V1003, H1029–S1049, L1099–L1119, F1124–L1144, Y1193–N1213, S1237–F1257, S1265–H1285, G1302–F1322, and T1324–I1344. N-linked (GlcNAc...) asparagine glycans are attached at residues N1412, N1553, and N1818. Residues R1876–P1958 form a disordered region. Polar residues-rich tracts occupy residues S1901–E1910, G1920–R1929, and S1937–P1958. An N-linked (GlcNAc...) asparagine glycan is attached at N2054.

The protein belongs to the pecanex family.

It is found in the membrane. In terms of biological role, may play a role in tumorigenesis of colorectal carcinomas with high microsatellite instability (MSI-H). In Homo sapiens (Human), this protein is Pecanex-like protein 2.